Here is a 944-residue protein sequence, read N- to C-terminus: Probable UDP-N-acetylglucosamine--peptide N-acetylglucosaminyltransferase SPINDLY (944 aa).

11 TPR repeats span residues 34–67 (GTDA…DGAN), 68–101 (VEAL…DPKN), 102–135 (ACAL…DPSY), 143–176 (AIVL…DSHY), 177–210 (APAY…RPLY), 211–244 (AEAY…SPNF), 252–285 (AIAL…NWHY), 286–319 (ADAM…NPRC), 320–353 (AEAC…KPNF), 355–387 (QSLN…NPTY), and 388–421 (AEAY…DPDS). Positions 422-944 (RNAGQNRLLA…RCEANGHSSR (523 aa)) are catalytic region. Residues 873-944 (NATAEEDNQS…RCEANGHSSR (72 aa)) form a disordered region. Residues 897–911 (PQPQIMVNGVTSPEG) are compositionally biased toward polar residues.

This sequence belongs to the glycosyltransferase 41 family. O-GlcNAc transferase subfamily. As to expression, expressed in all parts of plants, including immature leaf blade, leaf sheath, mature leaf blade, roots, germinating embryos and aleurone layers.

It is found in the nucleus. The enzyme catalyses L-seryl-[protein] + UDP-N-acetyl-alpha-D-glucosamine = 3-O-(N-acetyl-beta-D-glucosaminyl)-L-seryl-[protein] + UDP + H(+). The catalysed reaction is L-threonyl-[protein] + UDP-N-acetyl-alpha-D-glucosamine = 3-O-(N-acetyl-beta-D-glucosaminyl)-L-threonyl-[protein] + UDP + H(+). The protein operates within protein modification; protein glycosylation. In terms of biological role, probable O-linked N-acetylglucosamine transferase (OGT) involved in various processes such as gibberellin (GA) signaling pathway. OGTs catalyze the addition of nucleotide-activated sugars directly onto the polypeptide through O-glycosidic linkage with the hydroxyl of serine or threonine. Probably acts by adding O-linked sugars to yet unknown proteins. The sequence is that of Probable UDP-N-acetylglucosamine--peptide N-acetylglucosaminyltransferase SPINDLY (SPY) from Hordeum vulgare (Barley).